The following is a 118-amino-acid chain: MGSKAKKRVVLPTRPAPPTVEQILEDVRGAPAEDPVFTALAREDPLGPSGRTEDAEAQREQLYFQSRIYVAMNQRLQQAGAQLEQKRADLQQAGEELERDISQVGHVALPSTAAASLG.

At Y63 the chain carries Phosphotyrosine. Positions 69–105 (YVAMNQRLQQAGAQLEQKRADLQQAGEELERDISQVG) form a coiled coil.

It belongs to the UPF0449 family.

In Bos taurus (Bovine), this protein is UPF0449 protein C19orf25 homolog.